The primary structure comprises 381 residues: Odorant receptor 46a, isoform A (381 aa).

Residues 1–37 are Cytoplasmic-facing; it reads MSKGVEIFYKGQKAFLNILSLWPQIERRWRIIHQVNY. Residues 38-58 traverse the membrane as a helical segment; it reads VHVIVFWVLLFDLLLVLHVMA. Asparagine 59 carries an N-linked (GlcNAc...) asparagine glycan. The Extracellular segment spans residues 59-65; the sequence is NLSYMSE. Residues 66 to 86 traverse the membrane as a helical segment; that stretch reads VVKAIFILATSAGHTTKLLSI. Residues 87-127 lie on the Cytoplasmic side of the membrane; that stretch reads KANNVQMEELFRRLDNEEFRPRGANEELIFAAACERSRKLR. The helical transmembrane segment at 128–148 threads the bilayer; it reads DFYGALSFAALSMILIPQFAL. The Extracellular portion of the chain corresponds to 149 to 170; the sequence is DWSHLPLKTYNPLGENTGSPAY. The helical transmembrane segment at 171–191 threads the bilayer; the sequence is WLLYCYQCLALSVSCITNIGF. The Cytoplasmic segment spans residues 192–255; the sequence is DSLCSSLFIF…KTVERLLCKP (64 aa). The chain crosses the membrane as a helical span at residues 256 to 276; the sequence is ISVQIFCSVLVLTANFYAIAV. Topologically, residues 277-287 are extracellular; the sequence is LSDERLELFKY. A helical transmembrane segment spans residues 288-308; that stretch reads VTYQACMLIQIFILCYYAGEV. The Cytoplasmic portion of the chain corresponds to 309 to 355; the sequence is TQRSLDLPHELYKTSWVDWDYRSRRIALLFMQRLHSTLRIRTLNPSL. A helical transmembrane segment spans residues 356 to 376; the sequence is GFDLMLFSSIVNCSYSYFALL. Residues 377–381 lie on the Extracellular side of the membrane; sequence KRVNS.

The protein belongs to the insect chemoreceptor superfamily. Heteromeric odorant receptor channel (TC 1.A.69) family. Or2a subfamily. In terms of assembly, interacts with Orco. Complexes exist early in the endomembrane system in olfactory sensory neurons (OSNs), coupling these complexes to the conserved ciliary trafficking pathway. In terms of tissue distribution, isoform A is expressed in a subset of 17 olfactory receptor neurons in the maxillary palp.

The protein localises to the cell membrane. Its function is as follows. Odorant receptor which mediates acceptance or avoidance behavior, depending on its substrates. The odorant receptor repertoire encodes a large collection of odor stimuli that vary widely in identity, intensity, and duration. May form a complex with Orco to form odorant-sensing units, providing sensitive and prolonged odorant signaling and calcium permeability. The chain is Odorant receptor 46a, isoform A (Or46a) from Drosophila melanogaster (Fruit fly).